Here is a 142-residue protein sequence, read N- to C-terminus: Hemoglobin A subunit alpha-1 (142 aa).

Residues 2–142 form the Globin domain; the sequence is VLTAGDKANV…VATALTSKYR (141 aa). His-59 lines the O2 pocket. His-88 provides a ligand contact to heme b.

It belongs to the globin family. Tetramer of alpha-1, alpha-2 and two identical beta chains. Red blood cells.

In terms of biological role, involved in oxygen transport from the lung to the various peripheral tissues. This is Hemoglobin A subunit alpha-1 from Aldabrachelys gigantea (Aldabra giant tortoise).